A 176-amino-acid polypeptide reads, in one-letter code: Outer membrane protein assembly factor BamE (176 aa).

The first 21 residues, Met-1–Gly-21, serve as a signal peptide directing secretion. Cys-22 is lipidated: N-palmitoyl cysteine. The S-diacylglycerol cysteine moiety is linked to residue Cys-22. A disordered region spans residues Lys-121–Gln-176. The segment covering Gly-123–Asp-132 has biased composition (polar residues). A compositionally biased stretch (basic and acidic residues) spans Gln-134–Pro-144. Over residues Val-163 to Gln-176 the composition is skewed to pro residues.

The protein belongs to the BamE family. As to quaternary structure, part of the Bam complex.

It is found in the cell outer membrane. In terms of biological role, part of the outer membrane protein assembly complex, which is involved in assembly and insertion of beta-barrel proteins into the outer membrane. May have a structural role in maintaining the cell envelope integrity. The polypeptide is Outer membrane protein assembly factor BamE (Pseudomonas aeruginosa (strain ATCC 15692 / DSM 22644 / CIP 104116 / JCM 14847 / LMG 12228 / 1C / PRS 101 / PAO1)).